Here is a 721-residue protein sequence, read N- to C-terminus: 1,4-alpha-glucan branching enzyme GlgB (721 aa).

The active-site Nucleophile is D404. E457 serves as the catalytic Proton donor.

This sequence belongs to the glycosyl hydrolase 13 family. GlgB subfamily. Monomer.

The enzyme catalyses Transfers a segment of a (1-&gt;4)-alpha-D-glucan chain to a primary hydroxy group in a similar glucan chain.. It functions in the pathway glycan biosynthesis; glycogen biosynthesis. Catalyzes the formation of the alpha-1,6-glucosidic linkages in glycogen by scission of a 1,4-alpha-linked oligosaccharide from growing alpha-1,4-glucan chains and the subsequent attachment of the oligosaccharide to the alpha-1,6 position. The chain is 1,4-alpha-glucan branching enzyme GlgB from Novosphingobium aromaticivorans (strain ATCC 700278 / DSM 12444 / CCUG 56034 / CIP 105152 / NBRC 16084 / F199).